Reading from the N-terminus, the 495-residue chain is Aspartyl/glutamyl-tRNA(Asn/Gln) amidotransferase subunit B (495 aa).

It belongs to the GatB/GatE family. GatB subfamily. As to quaternary structure, heterotrimer of A, B and C subunits.

It catalyses the reaction L-glutamyl-tRNA(Gln) + L-glutamine + ATP + H2O = L-glutaminyl-tRNA(Gln) + L-glutamate + ADP + phosphate + H(+). The enzyme catalyses L-aspartyl-tRNA(Asn) + L-glutamine + ATP + H2O = L-asparaginyl-tRNA(Asn) + L-glutamate + ADP + phosphate + 2 H(+). In terms of biological role, allows the formation of correctly charged Asn-tRNA(Asn) or Gln-tRNA(Gln) through the transamidation of misacylated Asp-tRNA(Asn) or Glu-tRNA(Gln) in organisms which lack either or both of asparaginyl-tRNA or glutaminyl-tRNA synthetases. The reaction takes place in the presence of glutamine and ATP through an activated phospho-Asp-tRNA(Asn) or phospho-Glu-tRNA(Gln). This Beijerinckia indica subsp. indica (strain ATCC 9039 / DSM 1715 / NCIMB 8712) protein is Aspartyl/glutamyl-tRNA(Asn/Gln) amidotransferase subunit B.